A 66-amino-acid polypeptide reads, in one-letter code: Cytochrome c oxidase subunit 26, mitochondrial (66 aa).

A mitochondrion-targeting transit peptide spans 1 to 8 (MFFSQVLR). The Mitochondrial matrix portion of the chain corresponds to 9–27 (SSARAAPIKRYTGGRIGES). Residues 28–64 (WVITEGRRLIPEIFQWSAVLSVCLGWPGAVYFFSKAR) form a helical membrane-spanning segment. Residues 65-66 (KA) are Mitochondrial intermembrane-facing.

Belongs to the fungal cytochrome c oxidase subunit 26 family. In terms of assembly, component of the cytochrome c oxidase (complex IV, CIV), a multisubunit enzyme composed of 12 subunits. The complex is composed of a catalytic core of 3 subunits COX1, COX2 and COX3, encoded in the mitochondrial DNA, and 9 supernumerary subunits COX4, COX5A (or COX5B), COX6, COX7, COX8, COX9, COX12, COX13 and COX26, which are encoded in the nuclear genome. The complex exists as a monomer or a dimer and forms supercomplexes (SCs) in the inner mitochondrial membrane with a dimer of ubiquinol-cytochrome c oxidoreductase (cytochrome b-c1 complex, complex III, CIII), resulting in 2 different assemblies (supercomplexes III(2)IV and III(2)IV(2)).

It is found in the mitochondrion inner membrane. In terms of biological role, component of the cytochrome c oxidase, the last enzyme in the mitochondrial electron transport chain which drives oxidative phosphorylation. The respiratory chain contains 3 multisubunit complexes succinate dehydrogenase (complex II, CII), ubiquinol-cytochrome c oxidoreductase (cytochrome b-c1 complex, complex III, CIII) and cytochrome c oxidase (complex IV, CIV), that cooperate to transfer electrons derived from NADH and succinate to molecular oxygen, creating an electrochemical gradient over the inner membrane that drives transmembrane transport and the ATP synthase. Cytochrome c oxidase is the component of the respiratory chain that catalyzes the reduction of oxygen to water. Electrons originating from reduced cytochrome c in the intermembrane space (IMS) are transferred via the dinuclear copper A center (CU(A)) of COX2 and heme A of COX1 to the active site in COX1, a binuclear center (BNC) formed by heme A3 and copper B (CU(B)). The BNC reduces molecular oxygen to 2 water molecules using 4 electrons from cytochrome c in the IMS and 4 protons from the mitochondrial matrix. This is Cytochrome c oxidase subunit 26, mitochondrial (COX26) from Saccharomyces cerevisiae (strain ATCC 204508 / S288c) (Baker's yeast).